The primary structure comprises 139 residues: Large ribosomal subunit protein uL16 (139 aa).

Residues 1 to 19 (MLIPRRVKYRKQHHPKRTG) show a composition bias toward basic residues. The disordered stretch occupies residues 1-23 (MLIPRRVKYRKQHHPKRTGAAKG).

Belongs to the universal ribosomal protein uL16 family. Part of the 50S ribosomal subunit.

In terms of biological role, binds 23S rRNA and is also seen to make contacts with the A and possibly P site tRNAs. This Cutibacterium acnes (strain DSM 16379 / KPA171202) (Propionibacterium acnes) protein is Large ribosomal subunit protein uL16.